A 299-amino-acid polypeptide reads, in one-letter code: Leucine zipper transcription factor-like protein 1 (299 aa).

Residues 96 to 299 (LKLQTDISEL…KRLAKYESED (204 aa)) are a coiled coil. An interaction with BSS9 region spans residues 145-299 (GTTELLNKEI…KRLAKYESED (155 aa)).

Belongs to the LZTFL1 family. Self-associates. Interacts with BBS9; the interaction mediates the association of LZTL1 with the BBsome complex and regulates BBSome ciliary trafficking. As to expression, highly expressed in testis. Expressed in brain, cerebellum, eye, heart, kidney, liver, lung and trachea. In small intestine, graded expression along the crypt-villus axis with high levels in the villus apex and lower levels in the crypt stem cells (at protein level). Not expressed in skeletal muscle and white adipose tissue.

It is found in the cytoplasm. Functionally, regulates ciliary localization of the BBSome complex. Together with the BBSome complex, controls SMO ciliary trafficking and contributes to the sonic hedgehog (SHH) pathway regulation. May play a role in neurite outgrowth. May have tumor suppressor function. The polypeptide is Leucine zipper transcription factor-like protein 1 (Lztfl1) (Mus musculus (Mouse)).